Reading from the N-terminus, the 149-residue chain is Transcriptional repressor NrdR (149 aa).

A zinc finger lies at 3 to 34; that stretch reads CPFCSATDTKVIDSRLVADGHQVRRRRECVQC. Positions 49–139 constitute an ATP-cone domain; it reads PRVVKQDGSR…VYRAFEDVSE (91 aa).

This sequence belongs to the NrdR family. The cofactor is Zn(2+).

Functionally, negatively regulates transcription of bacterial ribonucleotide reductase nrd genes and operons by binding to NrdR-boxes. The sequence is that of Transcriptional repressor NrdR from Shewanella piezotolerans (strain WP3 / JCM 13877).